We begin with the raw amino-acid sequence, 274 residues long: Large ribosomal subunit protein uL2 (274 aa).

Residues 220 to 265 (VRGAAMNPRDHPHGGGEGRAPRGMSTPKTKWGKPARGVKTRHNPRF) are disordered. A compositionally biased stretch (basic and acidic residues) spans 227–239 (PRDHPHGGGEGRA). Residues 249–262 (KWGKPARGVKTRHN) show a composition bias toward basic residues.

Belongs to the universal ribosomal protein uL2 family. As to quaternary structure, part of the 50S ribosomal subunit. Forms a bridge to the 30S subunit in the 70S ribosome.

Functionally, one of the primary rRNA binding proteins. Required for association of the 30S and 50S subunits to form the 70S ribosome, for tRNA binding and peptide bond formation. It has been suggested to have peptidyltransferase activity; this is somewhat controversial. Makes several contacts with the 16S rRNA in the 70S ribosome. The protein is Large ribosomal subunit protein uL2 of Chloroflexus aurantiacus (strain ATCC 29364 / DSM 637 / Y-400-fl).